A 488-amino-acid polypeptide reads, in one-letter code: 26S proteasome non-ATPase regulatory subunit 3 homolog A (488 aa).

Residues 240-421 (CRYLFYLGKI…GCMVSKETGD (182 aa)) enclose the PCI domain. A disordered region spans residues 451-488 (RFPPNTHKEKESDEKRRERKQQEEELAKHMAEEDDDDF). A compositionally biased stretch (basic and acidic residues) spans 456–481 (THKEKESDEKRRERKQQEEELAKHMA).

It belongs to the proteasome subunit S3 family. Component of the 19S regulatory particle (RP/PA700) lid subcomplex of the 26S proteasome. The 26S proteasome is composed of a core protease (CP), known as the 20S proteasome, capped at one or both ends by the 19S regulatory particle (RP/PA700). The RP/PA700 complex is composed of at least 17 different subunits in two subcomplexes, the base and the lid, which form the portions proximal and distal to the 20S proteolytic core, respectively. Interacts with UCH1 and UCH2. As to expression, ubiquitous with highest expression in flowers.

Functionally, acts as a regulatory subunit of the 26 proteasome which is involved in the ATP-dependent degradation of ubiquitinated proteins. The polypeptide is 26S proteasome non-ATPase regulatory subunit 3 homolog A (Arabidopsis thaliana (Mouse-ear cress)).